A 156-amino-acid polypeptide reads, in one-letter code: MLTHLDSLGRASMVDVTDKAVTAREAVAEARVRMLPQTLQLIQQGGHPKGDVFAVARIAGIQAAKKTHELIPLCHPLLLTSIKVELQADGEDSVLIRAVCKLAGQTGVEMEALTAASVAALTIYDMCKAVDRGMVIEGVRLLEKLGGKSGHWQVQA.

Substrate contacts are provided by residues 73–75 (LCH) and 110–111 (ME). Aspartate 125 is an active-site residue.

Belongs to the MoaC family. Homohexamer; trimer of dimers.

The catalysed reaction is (8S)-3',8-cyclo-7,8-dihydroguanosine 5'-triphosphate = cyclic pyranopterin phosphate + diphosphate. Its pathway is cofactor biosynthesis; molybdopterin biosynthesis. Catalyzes the conversion of (8S)-3',8-cyclo-7,8-dihydroguanosine 5'-triphosphate to cyclic pyranopterin monophosphate (cPMP). The protein is Cyclic pyranopterin monophosphate synthase of Stutzerimonas stutzeri (strain A1501) (Pseudomonas stutzeri).